The sequence spans 698 residues: D-(-)-3-hydroxybutyrate oligomer hydrolase (698 aa).

The first 32 residues, 1-32, serve as a signal peptide directing secretion; the sequence is MTTIRGGSRRASLPALALLGVLLGACHSDDNA. Ser310 functions as the Charge relay system in the catalytic mechanism.

The protein belongs to the D-(-)-3-hydroxybutyrate oligomer hydrolase family.

It localises to the secreted. The catalysed reaction is (3R)-hydroxybutanoate dimer + H2O = 2 (R)-3-hydroxybutanoate + H(+). Its pathway is lipid metabolism; butanoate metabolism. Functionally, participates in the degradation of poly-3-hydroxybutyrate (PHB). It works downstream of poly(3-hydroxybutyrate) depolymerase, hydrolyzing D(-)-3-hydroxybutyrate oligomers of various length (3HB-oligomers) into 3HB-monomers. The protein is D-(-)-3-hydroxybutyrate oligomer hydrolase of Burkholderia thailandensis (strain ATCC 700388 / DSM 13276 / CCUG 48851 / CIP 106301 / E264).